Reading from the N-terminus, the 187-residue chain is Capsid protein VP10 (187 aa).

Residues C45 and C51 are joined by a disulfide bond.

It localises to the virion. Its function is as follows. VP10 self-assembles, together with capsid protein VP4, to form an icosahedral caspid of 87 nm in diameter, with a T=43 symmetry and composed of 420 hexamers and 12 pentamers. VP4 proteins arrange into hexons, while VP10 proteins form the pentameric densities located at the 5-fold axes in the virion. The stoichiometry of VP4:VP10 is 42:1. The sequence is that of Capsid protein VP10 from Sulfolobus polyhedral virus 1 (SPV1).